Here is a 483-residue protein sequence, read N- to C-terminus: Cysteine--tRNA ligase (483 aa).

Position 28 (Cys28) interacts with Zn(2+). The short motif at 30-40 (MTVYDYCHLGH) is the 'HIGH' region element. 3 residues coordinate Zn(2+): Cys212, His237, and Glu241. The short motif at 269–273 (KMSKS) is the 'KMSKS' region element. Lys272 provides a ligand contact to ATP.

This sequence belongs to the class-I aminoacyl-tRNA synthetase family. As to quaternary structure, monomer. Zn(2+) serves as cofactor.

The protein localises to the cytoplasm. It carries out the reaction tRNA(Cys) + L-cysteine + ATP = L-cysteinyl-tRNA(Cys) + AMP + diphosphate. In Bordetella avium (strain 197N), this protein is Cysteine--tRNA ligase.